The following is a 101-amino-acid chain: Small ribosomal subunit protein uS14 (101 aa).

Belongs to the universal ribosomal protein uS14 family. As to quaternary structure, part of the 30S ribosomal subunit. Contacts proteins S3 and S10.

Binds 16S rRNA, required for the assembly of 30S particles and may also be responsible for determining the conformation of the 16S rRNA at the A site. This is Small ribosomal subunit protein uS14 from Tropheryma whipplei (strain TW08/27) (Whipple's bacillus).